We begin with the raw amino-acid sequence, 132 residues long: Small ribosomal subunit protein uS8 (132 aa).

It belongs to the universal ribosomal protein uS8 family. Part of the 30S ribosomal subunit. Contacts proteins S5 and S12.

One of the primary rRNA binding proteins, it binds directly to 16S rRNA central domain where it helps coordinate assembly of the platform of the 30S subunit. This is Small ribosomal subunit protein uS8 from Halalkalibacterium halodurans (strain ATCC BAA-125 / DSM 18197 / FERM 7344 / JCM 9153 / C-125) (Bacillus halodurans).